The chain runs to 74 residues: MYIDATQYRNDDEFTQYAKGKVAQLRLMLNSKKSALQKDKELQQQAKAQESALAGEELRRRALSLATQNRMVTL.

Residues 29-63 (LNSKKSALQKDKELQQQAKAQESALAGEELRRRAL) adopt a coiled-coil conformation.

This is an uncharacterized protein from Pseudoalteromonas phage PM2 (Bacteriophage PM2).